A 387-amino-acid polypeptide reads, in one-letter code: 8-amino-7-oxononanoate synthase (387 aa).

Arginine 20 is a substrate binding site. 107–108 (GY) provides a ligand contact to pyridoxal 5'-phosphate. Substrate is bound at residue histidine 132. 3 residues coordinate pyridoxal 5'-phosphate: serine 181, histidine 209, and threonine 238. At lysine 241 the chain carries N6-(pyridoxal phosphate)lysine. Position 355 (threonine 355) interacts with substrate.

Belongs to the class-II pyridoxal-phosphate-dependent aminotransferase family. BioF subfamily. Homodimer. Pyridoxal 5'-phosphate serves as cofactor.

It catalyses the reaction 6-carboxyhexanoyl-[ACP] + L-alanine + H(+) = (8S)-8-amino-7-oxononanoate + holo-[ACP] + CO2. It functions in the pathway cofactor biosynthesis; biotin biosynthesis. In terms of biological role, catalyzes the decarboxylative condensation of pimeloyl-[acyl-carrier protein] and L-alanine to produce 8-amino-7-oxononanoate (AON), [acyl-carrier protein], and carbon dioxide. This is 8-amino-7-oxononanoate synthase from Dechloromonas aromatica (strain RCB).